A 209-amino-acid chain; its full sequence is Kynurenine formamidase (209 aa).

Phenylalanine 19 is a substrate binding site. Zn(2+) contacts are provided by histidine 49, histidine 53, and aspartate 55. Histidine 59 functions as the Proton donor/acceptor in the catalytic mechanism. 2 residues coordinate Zn(2+): histidine 160 and glutamate 172.

It belongs to the Cyclase 1 superfamily. KynB family. In terms of assembly, homodimer. It depends on Zn(2+) as a cofactor.

The catalysed reaction is N-formyl-L-kynurenine + H2O = L-kynurenine + formate + H(+). The protein operates within amino-acid degradation; L-tryptophan degradation via kynurenine pathway; L-kynurenine from L-tryptophan: step 2/2. In terms of biological role, catalyzes the hydrolysis of N-formyl-L-kynurenine to L-kynurenine, the second step in the kynurenine pathway of tryptophan degradation. This Delftia acidovorans (strain DSM 14801 / SPH-1) protein is Kynurenine formamidase.